The chain runs to 314 residues: tRNA pseudouridine synthase B (314 aa).

His43 lines the substrate pocket. Asp48 functions as the Nucleophile in the catalytic mechanism. Residues Tyr76, Tyr179, and Leu200 each contribute to the substrate site.

The protein belongs to the pseudouridine synthase TruB family. Type 1 subfamily.

It catalyses the reaction uridine(55) in tRNA = pseudouridine(55) in tRNA. In terms of biological role, responsible for synthesis of pseudouridine from uracil-55 in the psi GC loop of transfer RNAs. In Enterobacter sp. (strain 638), this protein is tRNA pseudouridine synthase B.